The following is a 393-amino-acid chain: MPVEEFERELNERREQGLYVTIRKIGSPQGAWIIVDGKKVLNLSSNNYLGFANHPRLKEAAKKGIDDYGAGPAAVRTIAGDQLPQEKLEEMLAEFKGAEAAVLYQSGFCANLGTIPALVGEGDAIFSDELNHASIIDGCRLSRAKIIRYPHLNVQTLEELLKQERQNYKKAMIITDGVFSMDGDIAPMDKLADLADKYQCILYVDDAHGEGVLGDSGRGIVDYFGLQGRVDVEIGTLSKAFGVVGGFAAGSKLLAELLKQKARPLLFSSAPTAADVYASMEAVRILQESDELVKKLWENANYFKEHMRKAGFDLGNSQTPITPVMIGDEITTQEFSKKLFERNVFAQAISYPTVPKGKARMRVMISATHSRDDLDFAVEQFTAVGKELGVIQS.

Position 107–108 (107–108 (GF)) interacts with pyridoxal 5'-phosphate. His132 serves as a coordination point for substrate. Pyridoxal 5'-phosphate-binding positions include Ser180, 205–208 (DDAH), and 236–239 (TLSK). Lys239 carries the post-translational modification N6-(pyridoxal phosphate)lysine. Thr353 is a binding site for substrate.

This sequence belongs to the class-II pyridoxal-phosphate-dependent aminotransferase family. BioF subfamily. As to quaternary structure, homodimer. Pyridoxal 5'-phosphate serves as cofactor.

The catalysed reaction is 6-carboxyhexanoyl-[ACP] + L-alanine + H(+) = (8S)-8-amino-7-oxononanoate + holo-[ACP] + CO2. The protein operates within cofactor biosynthesis; biotin biosynthesis. In terms of biological role, catalyzes the decarboxylative condensation of pimeloyl-[acyl-carrier protein] and L-alanine to produce 8-amino-7-oxononanoate (AON), [acyl-carrier protein], and carbon dioxide. The sequence is that of 8-amino-7-oxononanoate synthase from Coprothermobacter proteolyticus (strain ATCC 35245 / DSM 5265 / OCM 4 / BT).